Consider the following 70-residue polypeptide: ATP synthase subunit c (70 aa).

2 helical membrane-spanning segments follow: residues Ala-5 to Val-25 and Phe-47 to Val-67.

This sequence belongs to the ATPase C chain family. As to quaternary structure, F-type ATPases have 2 components, F(1) - the catalytic core - and F(0) - the membrane proton channel. F(1) has five subunits: alpha(3), beta(3), gamma(1), delta(1), epsilon(1). F(0) has three main subunits: a(1), b(2) and c(10-14). The alpha and beta chains form an alternating ring which encloses part of the gamma chain. F(1) is attached to F(0) by a central stalk formed by the gamma and epsilon chains, while a peripheral stalk is formed by the delta and b chains.

The protein resides in the cell membrane. Functionally, f(1)F(0) ATP synthase produces ATP from ADP in the presence of a proton or sodium gradient. F-type ATPases consist of two structural domains, F(1) containing the extramembraneous catalytic core and F(0) containing the membrane proton channel, linked together by a central stalk and a peripheral stalk. During catalysis, ATP synthesis in the catalytic domain of F(1) is coupled via a rotary mechanism of the central stalk subunits to proton translocation. In terms of biological role, key component of the F(0) channel; it plays a direct role in translocation across the membrane. A homomeric c-ring of between 10-14 subunits forms the central stalk rotor element with the F(1) delta and epsilon subunits. The chain is ATP synthase subunit c from Anoxybacillus flavithermus (strain DSM 21510 / WK1).